The sequence spans 403 residues: 26S proteasome regulatory subunit 6B homolog (403 aa).

An N-acetylmethionine modification is found at Met-1. 191 to 198 (GPPGTGKT) contributes to the ATP binding site.

Belongs to the AAA ATPase family.

It localises to the cytoplasm. The protein localises to the nucleus. Functionally, the 26S proteasome is involved in the ATP-dependent degradation of ubiquitinated proteins. The regulatory (or ATPase) complex confers ATP dependency and substrate specificity to the 26S complex. The chain is 26S proteasome regulatory subunit 6B homolog (psmC4) from Dictyostelium discoideum (Social amoeba).